The chain runs to 139 residues: Actin-depolymerizing factor 7 (139 aa).

In terms of domain architecture, ADF-H spans 7-139 (GMAVDDECKL…GLDVIRGRAN (133 aa)).

It belongs to the actin-binding proteins ADF family.

Its function is as follows. Actin-depolymerizing protein. Severs actin filaments (F-actin) and binds to actin monomers. The polypeptide is Actin-depolymerizing factor 7 (ADF7) (Oryza sativa subsp. japonica (Rice)).